A 677-amino-acid polypeptide reads, in one-letter code: Transketolase 1 (677 aa).

His27 serves as a coordination point for substrate. Thiamine diphosphate-binding positions include His66 and 114–116; that span reads GPL. Residue Asp155 coordinates Mg(2+). Positions 156 and 185 each coordinate thiamine diphosphate. Mg(2+) is bound by residues Asn185 and Ile187. Substrate-binding residues include His261, Arg356, and Ser383. A thiamine diphosphate-binding site is contributed by His261. Residues Glu415 and Phe442 each coordinate thiamine diphosphate. Catalysis depends on Glu415, which acts as the Proton donor. The substrate site is built by His466, Asp474, and Arg525.

This sequence belongs to the transketolase family. Homodimer. Mg(2+) serves as cofactor. Ca(2+) is required as a cofactor. It depends on Mn(2+) as a cofactor. Requires Co(2+) as cofactor. The cofactor is thiamine diphosphate.

The enzyme catalyses D-sedoheptulose 7-phosphate + D-glyceraldehyde 3-phosphate = aldehydo-D-ribose 5-phosphate + D-xylulose 5-phosphate. Functionally, catalyzes the transfer of a two-carbon ketol group from a ketose donor to an aldose acceptor, via a covalent intermediate with the cofactor thiamine pyrophosphate. The chain is Transketolase 1 (TKT1) from Candida albicans (Yeast).